We begin with the raw amino-acid sequence, 89 residues long: Small ribosomal subunit protein uS15 (89 aa).

It belongs to the universal ribosomal protein uS15 family. As to quaternary structure, part of the 30S ribosomal subunit. Forms a bridge to the 50S subunit in the 70S ribosome, contacting the 23S rRNA.

In terms of biological role, one of the primary rRNA binding proteins, it binds directly to 16S rRNA where it helps nucleate assembly of the platform of the 30S subunit by binding and bridging several RNA helices of the 16S rRNA. Its function is as follows. Forms an intersubunit bridge (bridge B4) with the 23S rRNA of the 50S subunit in the ribosome. The protein is Small ribosomal subunit protein uS15 of Corynebacterium aurimucosum (strain ATCC 700975 / DSM 44827 / CIP 107346 / CN-1) (Corynebacterium nigricans).